Reading from the N-terminus, the 751-residue chain is Ecdysteroid-phosphate phosphatase (751 aa).

Positions 16–60 constitute a UBA domain; it reads CISKQHLTPLQTLLQMGFPRHRAEKALASTGNRGVQIASDWLLAH. Residues 271 to 336 form the SH3 domain; it reads ATKQVQKVVY…PVNYTERTAE (66 aa). 2 disordered regions span residues 367 to 394 and 458 to 484; these read GRSI…FEES and EPPA…PGSL. Residues 466-479 show a composition bias toward basic and acidic residues; sequence RPDDTLSVHSDHSL. Residues 490–751 form a phosphatase-like region; sequence KNRKIYIMRH…RFEWNALSAT (262 aa). Arg498 is an active-site residue. His499 functions as the Tele-phosphohistidine intermediate in the catalytic mechanism. Residue His681 is part of the active site.

Its subcellular location is the cytoplasm. It is found in the cytosol. It localises to the nucleus. The enzyme catalyses ecdysone 22-phosphate + H2O = ecdysone + phosphate. It carries out the reaction 20-hydroxyecdysone 22-phosphate + H2O = 20-hydroxyecdysone + phosphate. It catalyses the reaction 2-deoxyecdysone 22-phosphate + H2O = 2-deoxyecdysone + phosphate. In terms of biological role, steroid phosphatase that dephosphorylates ecdysteroids such as ecdysone 22-phosphate (E22P), 3-epi-ecdysone 22-phosphate (E22P) and 3-epi-ecdysone 2-phosphate (E2P). Likely catalyzes the conversion of inactive phosphorylated ecdysteroids into their active forms. Shows high activity towards ecdysone 22-phosphate (E22P), but is also significantly active against 3-epi-ecdysone 22-phosphate (E22P) and 3-epi-ecdysone 2-phosphate (E2P). Also displays acid phosphatase activity towards 4-nitrophenyl phosphate (pNNP) in vitro. Has no activity towards 3-epi-ecdysone 3-phosphate (E3P). This chain is Ecdysteroid-phosphate phosphatase, found in Drosophila melanogaster (Fruit fly).